The sequence spans 207 residues: Uridine kinase (207 aa).

ATP is bound at residue 11 to 18; that stretch reads GGSGSGKT.

The protein belongs to the uridine kinase family.

Its subcellular location is the cytoplasm. The enzyme catalyses uridine + ATP = UMP + ADP + H(+). It carries out the reaction cytidine + ATP = CMP + ADP + H(+). Its pathway is pyrimidine metabolism; CTP biosynthesis via salvage pathway; CTP from cytidine: step 1/3. It participates in pyrimidine metabolism; UMP biosynthesis via salvage pathway; UMP from uridine: step 1/1. The chain is Uridine kinase from Staphylococcus haemolyticus (strain JCSC1435).